A 1926-amino-acid polypeptide reads, in one-letter code: Myosin-15 (1926 aa).

The Myosin N-terminal SH3-like domain occupies 29–79 (DGKKKCWIPDGENAYIEAEVKGSEDDGTVIVETADGESLSIKEDKIQQMNP). A Myosin motor domain is found at 83 to 770 (EMIEDMAMLT…FLGQLEAIRD (688 aa)). The residue at position 127 (Lys127) is an N6,N6,N6-trimethyllysine. 176–183 (GESGAGKT) contributes to the ATP binding site. 2 actin-binding regions span residues 647–669 (LNKL…NPNV) and 749–763 (RFGI…GFLG). Residues 773–802 (LSKVFTLFQARAQGKLMRIKFQKILEERDA) form the IQ domain. Residues 833 to 1926 (KSSEVGEEVA…REFGKKVQEE (1094 aa)) adopt a coiled-coil conformation.

This sequence belongs to the TRAFAC class myosin-kinesin ATPase superfamily. Myosin family. Muscle myosin is a hexameric protein that consists of 2 heavy chain subunits (MHC), 2 alkali light chain subunits (MLC) and 2 regulatory light chain subunits (MLC-2).

It localises to the cytoplasm. The protein resides in the myofibril. In terms of biological role, muscle contraction. In Homo sapiens (Human), this protein is Myosin-15 (MYH15).